We begin with the raw amino-acid sequence, 396 residues long: Capsular polysaccharide biosynthesis protein CapF (396 aa).

12 consecutive transmembrane segments (helical) span residues 7–27 (YMFV…LVIV), 41–61 (ALVI…SVIV), 74–94 (AILS…YVLG), 101–121 (ILIV…YGIY), 129–149 (LLGI…YIIY), 153–173 (HNLN…FAII), 198–218 (IFIL…NTGI), 232–252 (LGIF…ANSI), 279–299 (MVFI…FLGE), 315–335 (IILI…FLGT), 351–371 (LILL…YSLL), and 372–392 (GAAL…YYFY).

Belongs to the polysaccharide synthase family.

Its subcellular location is the cell membrane. It participates in capsule biogenesis; capsule polysaccharide biosynthesis. In terms of biological role, required for the biosynthesis of type 1 capsular polysaccharide. The sequence is that of Capsular polysaccharide biosynthesis protein CapF (capF) from Staphylococcus aureus.